We begin with the raw amino-acid sequence, 102 residues long: MNGQNIRIRLKAFDHRILDTSTKEIVSTAKRTGAQVRGPIPLPTKIEKFTVNRSPHVDKKSREQFEIRTHKRVLDIVDPTPQTVDALMKLDLAAGVDVEIKL.

The protein belongs to the universal ribosomal protein uS10 family. Part of the 30S ribosomal subunit.

Functionally, involved in the binding of tRNA to the ribosomes. The protein is Small ribosomal subunit protein uS10 of Beijerinckia indica subsp. indica (strain ATCC 9039 / DSM 1715 / NCIMB 8712).